A 91-amino-acid polypeptide reads, in one-letter code: Acylphosphatase (91 aa).

The region spanning 3–91 (CLRAIVKGKV…ANYSDFRIKH (89 aa)) is the Acylphosphatase-like domain. Residues Arg-18 and Asn-36 contribute to the active site.

This sequence belongs to the acylphosphatase family.

It catalyses the reaction an acyl phosphate + H2O = a carboxylate + phosphate + H(+). The protein is Acylphosphatase (acyP) of Dehalococcoides mccartyi (strain CBDB1).